Consider the following 627-residue polypeptide: Putative ankyrin repeat protein L122 (627 aa).

12 ANK repeats span residues 61 to 94 (KGWTALMIACAMCDKWSSFKTIRLLLKKGADVHI), 98 to 130 (KGRTVLSLMVNIITENKFNIMDLLIDKGADINS), 153 to 186 (HACYVLGKSVDPNLEKNDSKTVRYLLDKGADPNI), 190 to 223 (YGKTVLFYAARMKNQDKAYEISKTLIERGGNANH), 228 to 259 (AETVLIYLCISCSHYSCELIQLLLDNGVDINH), 263 to 296 (IGFTALMCACINIKNPSNFETIKFMLDKGANINL), 300 to 333 (DGFTAFMNIFGNNYFDYIVPVIQIMLDYGADIND), 337 to 370 (NNVTVLMMAVKFAKNDKNMTVINFLLDKGADLEI), 374 to 407 (YDWTALFYACRYSNSSGNNDAVKLLLDYGANVNV), 411 to 444 (LGHTPLIIACQYADNESNIDTVKLLLEYGANPNL), 448 to 480 (DKNTALSVAITWLSKNRYEVVKLLLYYHADSNT), and 491 to 523 (REYNLLVWIVKNIKCNKLDLLMLLIEHGANYSD).

This is Putative ankyrin repeat protein L122 from Acanthamoeba polyphaga (Amoeba).